We begin with the raw amino-acid sequence, 380 residues long: PqqA peptide cyclase (380 aa).

Positions 8-223 constitute a Radical SAM core domain; the sequence is VNPPLWLLAE…VADYRQKMAA (216 aa). 3 residues coordinate [4Fe-4S] cluster: C22, C26, and C29.

It belongs to the radical SAM superfamily. PqqE family. As to quaternary structure, interacts with PqqD. The interaction is necessary for activity of PqqE. It depends on [4Fe-4S] cluster as a cofactor.

The catalysed reaction is [PQQ precursor protein] + S-adenosyl-L-methionine = E-Y cross-linked-[PQQ precursor protein] + 5'-deoxyadenosine + L-methionine + H(+). The protein operates within cofactor biosynthesis; pyrroloquinoline quinone biosynthesis. Catalyzes the cross-linking of a glutamate residue and a tyrosine residue in the PqqA protein as part of the biosynthesis of pyrroloquinoline quinone (PQQ). In Klebsiella pneumoniae (strain 342), this protein is PqqA peptide cyclase.